Reading from the N-terminus, the 452-residue chain is cAMP/cGMP-dependent 3',5'-cAMP/cGMP phosphodiesterase A (452 aa).

An N-terminal signal peptide occupies residues 1-23 (MALNKKLISLLLLIFIILNIVNS). A propeptide spanning residues 24-49 (HQQEDCDDDDEDIGISAERSERRSVK) is cleaved from the precursor. Asparagine 101, asparagine 141, and asparagine 277 each carry an N-linked (GlcNAc...) asparagine glycan.

This sequence belongs to the cyclic nucleotide phosphodiesterase class-II family.

It is found in the secreted. The protein localises to the extracellular space. Its subcellular location is the cell surface. The catalysed reaction is 3',5'-cyclic AMP + H2O = AMP + H(+). The enzyme catalyses 3',5'-cyclic GMP + H2O = GMP + H(+). With respect to regulation, inhibited by dithiotreitol (DTT). Functionally, phosphodiesterase which displays a preference for cAMP over cGMP. Involved in the degradation of extracellular cAMP. Maintains the responsiveness of cells to the chemoattractant cAMP during the aggregation phase of development. In Dictyostelium discoideum (Social amoeba), this protein is cAMP/cGMP-dependent 3',5'-cAMP/cGMP phosphodiesterase A (pdsA).